A 581-amino-acid polypeptide reads, in one-letter code: Multidrug and toxin extrusion protein 2 (581 aa).

Topologically, residues 1–33 are cytoplasmic; the sequence is MDSLQDTVPLDHGGCCPALSRLVPRGFGTEMWT. The helical transmembrane segment at 34–54 threads the bilayer; sequence LFALSGPLFLFQVLTFMIYIV. Residues 55–66 are Extracellular-facing; it reads STVFCGHLGKVE. The helical transmembrane segment at 67–87 threads the bilayer; it reads LASVTLAVAFVNVCGVSVGVG. Over 88 to 119 the chain is Cytoplasmic; sequence LSSACDTLMSQSFGSPNKKHVGVILQRGALVL. A helical transmembrane segment spans residues 120–140; sequence LLCCLPCWALFLNTQHILLLF. Over 141-153 the chain is Extracellular; sequence RQDPEVSRLTQDY. The chain crosses the membrane as a helical span at residues 154–174; it reads VMIFIPGLPVIFLYNLLAKYL. Over 175–183 the chain is Cytoplasmic; the sequence is QNQKITWPQ. Residues 184 to 204 form a helical membrane-spanning segment; the sequence is VLSGVVGNCVNGVANYALVSV. Over 205–212 the chain is Extracellular; that stretch reads LNLGVRGS. Residues 213–233 traverse the membrane as a helical segment; the sequence is AYANIISQFAQTVFLLLYIVL. Topologically, residues 234-253 are cytoplasmic; the sequence is KKLHLETWAGWSSQCLQDWG. The chain crosses the membrane as a helical span at residues 254-273; the sequence is PFFSLAVPSMLMICVEWWAY. Topologically, residues 274–317 are extracellular; the sequence is EIGSFLMGLLSVVDLSAQAVIYEVATVTYMRHSHHLAYTAHVAR. Residues 318-338 form a helical membrane-spanning segment; the sequence is IPLGLSIGVCVRVGMALGAAD. At 339–346 the chain is on the cytoplasmic side; sequence TVQAKRSA. A helical membrane pass occupies residues 347–367; the sequence is VSGVLSIVGISLVLGTLISIL. The Extracellular portion of the chain corresponds to 368-380; the sequence is KNQLGHIFTNDED. A helical membrane pass occupies residues 381 to 401; the sequence is VIALVSQVLPVYSVFHVFEAI. Topologically, residues 402 to 420 are cytoplasmic; it reads CCVYGGVLRGTGKQAFGAA. A helical membrane pass occupies residues 421-441; the sequence is VNAITYYIIGLPLGILLTFVV. Residues 442-444 lie on the Extracellular side of the membrane; sequence RMR. Residues 445–465 form a helical membrane-spanning segment; that stretch reads IMGLWLGMLACVFLATAAFVA. The Cytoplasmic portion of the chain corresponds to 466 to 557; sequence YTARLDWKLA…LSVKQLVIRR (92 aa). Residues 481–513 form a disordered region; the sequence is KHSGQQQQQQRAESTATRSGPEKAVLSSVATGS. A helical transmembrane segment spans residues 558–578; that stretch reads GAALGAASATLMVGLTVRILA. Residues 579 to 581 are Extracellular-facing; that stretch reads TRH.

The protein belongs to the multi antimicrobial extrusion (MATE) (TC 2.A.66.1) family.

It localises to the cell membrane. The protein resides in the apical cell membrane. It carries out the reaction thiamine(out) + H(+)(in) = thiamine(in) + H(+)(out). The enzyme catalyses estrone 3-sulfate(in) + H(+)(out) = estrone 3-sulfate(out) + H(+)(in). The catalysed reaction is creatinine(in) + H(+)(out) = creatinine(out) + H(+)(in). Its function is as follows. Multidrug efflux pump that functions as a H(+)/organic cation antiporter. Mediates the efflux of cationic compounds, such as the model cations, tetraethylammonium (TEA) and 1-methyl-4-phenylpyridinium (MPP+), the platinum-based drug oxaliplatin or weak bases that are positively charged at physiological pH, cimetidine or the antidiabetic drug metformin. Mediates the efflux of the endogenous compounds creatinine, thiamine and estrone-3-sulfate. Plays a physiological role in the excretion of drugs, toxins and endogenous metabolites through the kidney. In Pongo abelii (Sumatran orangutan), this protein is Multidrug and toxin extrusion protein 2 (SLC47A2).